Here is a 159-residue protein sequence, read N- to C-terminus: Small ribosomal subunit protein bS6 (159 aa).

Basic and acidic residues predominate over residues 93–151 (VDEHEEGPSAMMRKADRDRERDDRGPREGGFRGDREGRGDREGGGFRGDRGPRRPREDA). The tract at residues 93 to 159 (VDEHEEGPSA…DADTAAASEE (67 aa)) is disordered.

It belongs to the bacterial ribosomal protein bS6 family.

In terms of biological role, binds together with bS18 to 16S ribosomal RNA. In Rhodopseudomonas palustris (strain HaA2), this protein is Small ribosomal subunit protein bS6.